The chain runs to 247 residues: Neurotrophic factor BDNF precursor form (247 aa).

The N-terminal stretch at 1-18 (MTILFLTMVISYFGCMKA) is a signal peptide. Residues 19–128 (APMKEANVRG…AANMSMRVRR (110 aa)) constitute a propeptide that is removed on maturation. The N-linked (GlcNAc...) asparagine glycan is linked to N121. Disulfide bonds link C141–C208, C186–C237, and C196–C239.

Belongs to the NGF-beta family. In terms of assembly, monomers and homodimers. Binds to NTRK2/TRKB. Can form heterodimers with other neurotrophin family members, such as NTF3 and NTF4 (in vitro), but the physiological relevance of this is not clear. BDNF precursor form: interacts with the heterodimer formed by NGFR and SORCS2. Mature BDNF has much lower affinity for the heterodimer formed by NGFR and SORCS2. Post-translationally, N-glycosylated and glycosulfated, contrary to mature BDNF. Mature BDNF is produced by proteolytic removal of the propeptide, catalyzed by a FURIN family member. In addition, the precursor form is proteolytically cleaved within the propeptide, but this is not an obligatory intermediate for the production of mature BDNF. Can be converted into mature BDNF by plasmin (PLG).

It localises to the secreted. Important signaling molecule that activates signaling cascades downstream of NTRK2. During development, promotes the survival and differentiation of selected neuronal populations of the peripheral and central nervous systems. Participates in axonal growth, pathfinding and in the modulation of dendritic growth and morphology. Major regulator of synaptic transmission and plasticity at adult synapses in many regions of the CNS. The versatility of BDNF is emphasized by its contribution to a range of adaptive neuronal responses including long-term potentiation (LTP), long-term depression (LTD), certain forms of short-term synaptic plasticity, as well as homeostatic regulation of intrinsic neuronal excitability. Its function is as follows. Important signaling molecule that activates signaling cascades downstream of NTRK2. Activates signaling cascades via the heterodimeric receptor formed by NGFR and SORCS2. Signaling via NGFR and SORCS2 plays a role in synaptic plasticity and long-term depression (LTD). Binding to NGFR and SORCS2 promotes neuronal apoptosis. Promotes neuronal growth cone collapse. This is Neurotrophic factor BDNF precursor form (BDNF) from Ailurus fulgens (Himalayan red panda).